The following is a 189-amino-acid chain: CASP-like protein 1F2 (189 aa).

Topologically, residues 1–27 (MESLEVANGKSSALGVSREASSPPQMG) are cytoplasmic. Residues 28–48 (FFIAQVVLRFFTLAFTGAAIA) form a helical membrane-spanning segment. At 49–77 (VMVTAKETVEVFSISFTVRYSYLSAFKFL) the chain is on the extracellular side. A helical transmembrane segment spans residues 78 to 98 (VGADAVVCGFSMLSLIFVSIF). The Cytoplasmic portion of the chain corresponds to 99–113 (NKGKSNHYFFLYFHD). The chain crosses the membrane as a helical span at residues 114–134 (LILMVLSMSACAAATAVGYVG). At 135 to 156 (RYGQDKAAWMAVCGNVKMFCDK) the chain is on the extracellular side. A helical membrane pass occupies residues 157 to 177 (ALASILLSLIGFICLFLLTIM). At 178-189 (AARNLRVSGHLI) the chain is on the cytoplasmic side.

It belongs to the Casparian strip membrane proteins (CASP) family. In terms of assembly, homodimer and heterodimers.

It localises to the cell membrane. The protein is CASP-like protein 1F2 of Vitis vinifera (Grape).